A 266-amino-acid polypeptide reads, in one-letter code: Putative pyruvate, phosphate dikinase regulatory protein (266 aa).

Residue 149-156 (GVSRTSKT) participates in ADP binding.

This sequence belongs to the pyruvate, phosphate/water dikinase regulatory protein family. PDRP subfamily.

The catalysed reaction is N(tele)-phospho-L-histidyl/L-threonyl-[pyruvate, phosphate dikinase] + ADP = N(tele)-phospho-L-histidyl/O-phospho-L-threonyl-[pyruvate, phosphate dikinase] + AMP + H(+). The enzyme catalyses N(tele)-phospho-L-histidyl/O-phospho-L-threonyl-[pyruvate, phosphate dikinase] + phosphate + H(+) = N(tele)-phospho-L-histidyl/L-threonyl-[pyruvate, phosphate dikinase] + diphosphate. Its function is as follows. Bifunctional serine/threonine kinase and phosphorylase involved in the regulation of the pyruvate, phosphate dikinase (PPDK) by catalyzing its phosphorylation/dephosphorylation. The chain is Putative pyruvate, phosphate dikinase regulatory protein from Geobacillus kaustophilus (strain HTA426).